The chain runs to 593 residues: Aspartate--tRNA ligase (593 aa).

An L-aspartate-binding site is contributed by glutamate 180. The aspartate stretch occupies residues 204–207; sequence QIFK. L-aspartate is bound at residue arginine 226. ATP-binding positions include 226 to 228 and glutamine 235; that span reads RDE. Histidine 453 lines the L-aspartate pocket. Position 487 (glutamate 487) interacts with ATP. Arginine 494 is an L-aspartate binding site. Position 539 to 542 (539 to 542) interacts with ATP; sequence GLDR.

Belongs to the class-II aminoacyl-tRNA synthetase family. Type 1 subfamily. In terms of assembly, homodimer.

The protein localises to the cytoplasm. It carries out the reaction tRNA(Asp) + L-aspartate + ATP = L-aspartyl-tRNA(Asp) + AMP + diphosphate. Functionally, catalyzes the attachment of L-aspartate to tRNA(Asp) in a two-step reaction: L-aspartate is first activated by ATP to form Asp-AMP and then transferred to the acceptor end of tRNA(Asp). The protein is Aspartate--tRNA ligase of Clostridium botulinum (strain 657 / Type Ba4).